Reading from the N-terminus, the 172-residue chain is MIDGDGYRLNVGIVICNNHGQVFWAKRYGQHSWQFPQGGIDDGETPEQAMFRELYEEVGLTHKDVKIIASSRHWLRYKLPKRLVRWDSKPVCIGQKQKWFLLRLECDESKINMQKGSSPEFDGWRWVSYWYPVRQVVSFKRDVYRRAMKEFASLAMPFRERKLKGKKVKRRG.

Residues 6–149 (GYRLNVGIVI…KRDVYRRAMK (144 aa)) form the Nudix hydrolase domain. The short motif at 38–59 (GGIDDGETPEQAMFRELYEEVG) is the Nudix box element.

Belongs to the Nudix hydrolase family. RppH subfamily. A divalent metal cation serves as cofactor.

Functionally, accelerates the degradation of transcripts by removing pyrophosphate from the 5'-end of triphosphorylated RNA, leading to a more labile monophosphorylated state that can stimulate subsequent ribonuclease cleavage. The polypeptide is RNA pyrophosphohydrolase (Vibrio vulnificus (strain CMCP6)).